A 338-amino-acid chain; its full sequence is Lipoyl synthase (338 aa).

Residues 1-24 (MTTVQEAVPNLIPTQDATPRPAPK) form a disordered region. Residues C84, C89, C95, C110, C114, C117, and S324 each contribute to the [4Fe-4S] cluster site. The Radical SAM core domain maps to 96–313 (FSGGTATFMI…AEEGYKMGFK (218 aa)).

The protein belongs to the radical SAM superfamily. Lipoyl synthase family. [4Fe-4S] cluster serves as cofactor.

The protein resides in the cytoplasm. It carries out the reaction [[Fe-S] cluster scaffold protein carrying a second [4Fe-4S](2+) cluster] + N(6)-octanoyl-L-lysyl-[protein] + 2 oxidized [2Fe-2S]-[ferredoxin] + 2 S-adenosyl-L-methionine + 4 H(+) = [[Fe-S] cluster scaffold protein] + N(6)-[(R)-dihydrolipoyl]-L-lysyl-[protein] + 4 Fe(3+) + 2 hydrogen sulfide + 2 5'-deoxyadenosine + 2 L-methionine + 2 reduced [2Fe-2S]-[ferredoxin]. Its pathway is protein modification; protein lipoylation via endogenous pathway; protein N(6)-(lipoyl)lysine from octanoyl-[acyl-carrier-protein]: step 2/2. In terms of biological role, catalyzes the radical-mediated insertion of two sulfur atoms into the C-6 and C-8 positions of the octanoyl moiety bound to the lipoyl domains of lipoate-dependent enzymes, thereby converting the octanoylated domains into lipoylated derivatives. This Pseudomonas putida (strain ATCC 700007 / DSM 6899 / JCM 31910 / BCRC 17059 / LMG 24140 / F1) protein is Lipoyl synthase.